The primary structure comprises 683 residues: E3 ubiquitin-protein ligase RNF103 (683 aa).

Helical transmembrane passes span 6 to 26, 326 to 346, 366 to 386, and 411 to 431; these read FFLLLYFLVLFVLARFFEAIV, LFVLSLVLVNLMAWMDLFITQ, LLIISWLPVLGFLQLPYLDSF, and MFYTSHPALFLSTYLGHGLLI. A compositionally biased stretch (acidic residues) spans 525-542; it reads EEMSESSQDTENDSDSDN. The tract at residues 525 to 548 is disordered; it reads EEMSESSQDTENDSDSDNMDTFSS. An RING-type zinc finger spans residues 619–661; the sequence is CVVCLENFENGCLLMGLPCGHVFHQNCIVMWLAGGRHCCPVCR.

In terms of assembly, interacts with DERL1 and VCP. As to expression, highly expressed in the normal cerebellum but not in the cerebral cortex.

The protein resides in the endoplasmic reticulum membrane. The catalysed reaction is S-ubiquitinyl-[E2 ubiquitin-conjugating enzyme]-L-cysteine + [acceptor protein]-L-lysine = [E2 ubiquitin-conjugating enzyme]-L-cysteine + N(6)-ubiquitinyl-[acceptor protein]-L-lysine.. The protein operates within protein modification; protein ubiquitination. In terms of biological role, acts as an E2-dependent E3 ubiquitin-protein ligase, probably involved in the ER-associated protein degradation pathway. The polypeptide is E3 ubiquitin-protein ligase RNF103 (Rnf103) (Mus musculus (Mouse)).